The chain runs to 397 residues: Cytoplasmic tRNA 2-thiolation protein 2 (397 aa).

It belongs to the CTU2/NCS2 family.

Its subcellular location is the cytoplasm. It functions in the pathway tRNA modification; 5-methoxycarbonylmethyl-2-thiouridine-tRNA biosynthesis. Its function is as follows. Plays a central role in 2-thiolation of mcm(5)S(2)U at tRNA wobble positions of tRNA(Lys), tRNA(Glu) and tRNA(Gln). May act by forming a heterodimer with NCS6/CTU1 that ligates sulfur from thiocarboxylated URM1 onto the uridine of tRNAs at wobble position. The sequence is that of Cytoplasmic tRNA 2-thiolation protein 2 from Drosophila grimshawi (Hawaiian fruit fly).